The primary structure comprises 81 residues: uncharacterized protein (81 aa).

The first 16 residues, 1–16, serve as a signal peptide directing secretion; the sequence is MNRLTFYGLCLSGAVG. Residues 55-81 are disordered; the sequence is TIDPHHNHHDDHHDSHGHGHGKIKGHH. Residues 57-71 are compositionally biased toward basic and acidic residues; sequence DPHHNHHDDHHDSHG. Over residues 72-81 the composition is skewed to basic residues; that stretch reads HGHGKIKGHH.

It localises to the secreted. This is an uncharacterized protein from Dictyostelium discoideum (Social amoeba).